We begin with the raw amino-acid sequence, 148 residues long: Fluoride-specific ion channel FluC 2 (148 aa).

The next 4 membrane-spanning stretches (helical) occupy residues 23 to 43 (LGHL…RLAV), 61 to 81 (GTLA…TLIF), 92 to 112 (FWVL…LHTL), and 120 to 140 (LLGG…ALAG). Na(+)-binding residues include G99 and T102.

This sequence belongs to the fluoride channel Fluc/FEX (TC 1.A.43) family.

It is found in the cell membrane. It carries out the reaction fluoride(in) = fluoride(out). Na(+) is not transported, but it plays an essential structural role and its presence is essential for fluoride channel function. In terms of biological role, fluoride-specific ion channel. Important for reducing fluoride concentration in the cell, thus reducing its toxicity. This chain is Fluoride-specific ion channel FluC 2, found in Rubrobacter xylanophilus (strain DSM 9941 / JCM 11954 / NBRC 16129 / PRD-1).